Consider the following 279-residue polypeptide: Biotin synthase (279 aa).

One can recognise a Radical SAM core domain in the interval 2-232 (VRNSRLDICS…NVTIKIAAGR (231 aa)). Residues Cys-20, Cys-24, and Cys-27 each contribute to the [4Fe-4S] cluster site. [2Fe-2S] cluster contacts are provided by Cys-96, Cys-156, and Lys-227.

This sequence belongs to the radical SAM superfamily. Biotin synthase family. As to quaternary structure, homodimer. [4Fe-4S] cluster serves as cofactor. It depends on [2Fe-2S] cluster as a cofactor.

It catalyses the reaction (4R,5S)-dethiobiotin + (sulfur carrier)-SH + 2 reduced [2Fe-2S]-[ferredoxin] + 2 S-adenosyl-L-methionine = (sulfur carrier)-H + biotin + 2 5'-deoxyadenosine + 2 L-methionine + 2 oxidized [2Fe-2S]-[ferredoxin]. Its pathway is cofactor biosynthesis; biotin biosynthesis; biotin from 7,8-diaminononanoate: step 2/2. Catalyzes the conversion of dethiobiotin (DTB) to biotin by the insertion of a sulfur atom into dethiobiotin via a radical-based mechanism. This is Biotin synthase from Thermotoga neapolitana (strain ATCC 49049 / DSM 4359 / NBRC 107923 / NS-E).